The chain runs to 305 residues: Probable GTP 3',8-cyclase (305 aa).

In terms of domain architecture, Radical SAM core spans R6–D233. R15 provides a ligand contact to GTP. The [4Fe-4S] cluster site is built by C22 and C26. Y28 is a binding site for S-adenosyl-L-methionine. C29 serves as a coordination point for [4Fe-4S] cluster. Residue R62 participates in GTP binding. G66 provides a ligand contact to S-adenosyl-L-methionine. Residue T92 participates in GTP binding. S116 serves as a coordination point for S-adenosyl-L-methionine. Position 153 (K153) interacts with GTP. [4Fe-4S] cluster-binding residues include C249 and C252. R254 to R256 lines the GTP pocket. A [4Fe-4S] cluster-binding site is contributed by C266.

Belongs to the radical SAM superfamily. MoaA family. [4Fe-4S] cluster is required as a cofactor.

It catalyses the reaction GTP + AH2 + S-adenosyl-L-methionine = (8S)-3',8-cyclo-7,8-dihydroguanosine 5'-triphosphate + 5'-deoxyadenosine + L-methionine + A + H(+). It participates in cofactor biosynthesis; molybdopterin biosynthesis. Catalyzes the cyclization of GTP to (8S)-3',8-cyclo-7,8-dihydroguanosine 5'-triphosphate. The polypeptide is Probable GTP 3',8-cyclase (Methanothermobacter thermautotrophicus (strain ATCC 29096 / DSM 1053 / JCM 10044 / NBRC 100330 / Delta H) (Methanobacterium thermoautotrophicum)).